The sequence spans 529 residues: GTPase Obg (529 aa).

The Obg domain occupies 2–159 (ASFVDRVVLH…SDIVLELKSI (158 aa)). The region spanning 160 to 343 (ADIALVGFPS…LGFAMAEIVK (184 aa)) is the OBG-type G domain. GTP contacts are provided by residues 166–173 (GFPSAGKS), 191–195 (FTTLI), 212–215 (DVPG), 295–298 (NKVD), and 324–326 (SAT). Residues S173 and T193 each contribute to the Mg(2+) site. In terms of domain architecture, OCT spans 363–447 (PRAVNEAGFK…DDGVVFDWEP (85 aa)). A compositionally biased stretch (basic and acidic residues) spans 466-502 (FADIGDRPTRGQKRDEQQERRDAKAAARAELEAERKA). Residues 466 to 529 (FADIGDRPTR…ESGLTTENEE (64 aa)) are disordered.

It belongs to the TRAFAC class OBG-HflX-like GTPase superfamily. OBG GTPase family. In terms of assembly, monomer. It depends on Mg(2+) as a cofactor.

The protein resides in the cytoplasm. Its function is as follows. An essential GTPase which binds GTP, GDP and possibly (p)ppGpp with moderate affinity, with high nucleotide exchange rates and a fairly low GTP hydrolysis rate. Plays a role in control of the cell cycle, stress response, ribosome biogenesis and in those bacteria that undergo differentiation, in morphogenesis control. The sequence is that of GTPase Obg from Arthrobacter sp. (strain FB24).